We begin with the raw amino-acid sequence, 354 residues long: Rhodopsin (354 aa).

Over 1–36 (MNGTEGPYFYVPMVNTTGIVRSPYEYPQYYLVSPAA) the chain is Extracellular. N-linked (GlcNAc...) asparagine glycans are attached at residues N2 and N15. A helical membrane pass occupies residues 37–61 (YACLGAYMFFLILVGFPVNFLTLYV). The Cytoplasmic segment spans residues 62–73 (TIEHKKLRTPLN). Residues 74–96 (YILLNLAVADLFMVFGGFTTTIY) form a helical membrane-spanning segment. The Extracellular portion of the chain corresponds to 97-110 (TSMHGYFVLGRLGC). C110 and C187 are disulfide-bonded. Residues 111 to 133 (NLEGYFATLGGEIGLWSLVVLAV) traverse the membrane as a helical segment. The 'Ionic lock' involved in activated form stabilization signature appears at 134–136 (ERW). Over 134–152 (ERWLVVCKPISNFRFTENH) the chain is Cytoplasmic. A helical transmembrane segment spans residues 153-173 (AIMGLVFTWIMANACAAPPLL). The Extracellular segment spans residues 174–202 (GWSRYIPEGMQCSCGVDYYTRAEGFNNES). A helical transmembrane segment spans residues 203 to 224 (FVIYMFICHFCIPLVVVFFCYG). At 225-252 (RLLCAVKEAAAAQQESETTQRAEREVTR) the chain is on the cytoplasmic side. A helical membrane pass occupies residues 253–274 (MVVILVIGFLVCWTPYASVAWY). The Extracellular segment spans residues 275–286 (IFSNQGSEFGPL). The helical transmembrane segment at 287-308 (FMTIPAFFAKSSSIYNPMIYIC) threads the bilayer. K296 bears the N6-(retinylidene)lysine mark. Topologically, residues 309–354 (MNKQFRHCMITTLCCGKNPFEEEEGASTTASKTEASSVSSSSVSPA) are cytoplasmic. Residues C322 and C323 are each lipidated (S-palmitoyl cysteine). Positions 333 to 354 (GASTTASKTEASSVSSSSVSPA) are disordered. Over residues 334–354 (ASTTASKTEASSVSSSSVSPA) the composition is skewed to low complexity.

This sequence belongs to the G-protein coupled receptor 1 family. Opsin subfamily. In terms of processing, phosphorylated on some or all of the serine and threonine residues present in the C-terminal region. Contains one covalently linked retinal chromophore.

The protein resides in the membrane. Its subcellular location is the cell projection. It localises to the cilium. It is found in the photoreceptor outer segment. Its function is as follows. Photoreceptor required for image-forming vision at low light intensity. While most salt water fish species use retinal as chromophore, most freshwater fish use 3-dehydroretinal, or a mixture of retinal and 3-dehydroretinal. Light-induced isomerization of 11-cis to all-trans retinal triggers a conformational change that activates signaling via G-proteins. Subsequent receptor phosphorylation mediates displacement of the bound G-protein alpha subunit by arrestin and terminates signaling. This is Rhodopsin (rho) from Gambusia affinis (Western mosquitofish).